The following is a 346-amino-acid chain: Transcription termination factor 4, mitochondrial (346 aa).

Residues 1–42 constitute a mitochondrion transit peptide; it reads MASLGRQVPEWHRLLALSWACLVRQTPHLREQKQMSPSLSCK. MTERF repeat units follow at residues 142–172, 177–204, 209–239, 245–270, and 290–318; these read FNAL…LGLG, KRVL…LREK, AQHI…YAYF, HLDI…YLER, and LRNI…VFKK. The segment at 310–327 is dimerization with NSUN4; it reads VEEFQVFKKLLDQEEEEE. Positions 321-346 are disordered; the sequence is DQEEEEESESHASEEEEEEEEEEELL. The segment covering 322–346 has biased composition (acidic residues); sequence QEEEEESESHASEEEEEEEEEEELL.

Belongs to the mTERF family. Heterodimer with NSUN4; this interaction may be required for NSUN4 recruitment to the mitochondrial large ribosomal subunit. In terms of tissue distribution, widely expressed, with highest levels in liver, followed by testis, kidney and brain.

The protein localises to the mitochondrion. Functionally, regulator of mitochondrial ribosome biogenesis and translation. Binds to mitochondrial ribosomal RNAs 16S, 12S and 7S. Targets NSUN4 RNA methyltransferase to the mitochondrial large ribosomal subunit. This chain is Transcription termination factor 4, mitochondrial (Mterf4), found in Mus musculus (Mouse).